Here is a 319-residue protein sequence, read N- to C-terminus: MSAALAAAVQPSAPASAQTADRLSHLKRLEAEAIHIFRETVAETENPVMLYSIGKDSSVLLHLALKAFAPGRLPFPLLHVDTTWKFREMIAFRDARAKELGLDLLVHTNPDGLARGVGPVSHGSEVHTDVMKTQALRQALDKHKFDAAFGGARRDEEASRAKERIISLRTAQHRWDPKRQRAEPWHLYNLKKKRGESLRVFPLSNWTELDIWLYIEQENIPIVPLYFAQERPVVEREGQLIMVDDERLPLEPGETPQQRLVRFRTLGCYPLTGAVESDAATLPEIIGETLAARTSERQGRVIDKDGAGAMERKKQEGYF.

This sequence belongs to the PAPS reductase family. CysD subfamily. In terms of assembly, heterodimer composed of CysD, the smaller subunit, and CysN.

The catalysed reaction is sulfate + ATP + H(+) = adenosine 5'-phosphosulfate + diphosphate. The protein operates within sulfur metabolism; hydrogen sulfide biosynthesis; sulfite from sulfate: step 1/3. Its function is as follows. With CysN forms the ATP sulfurylase (ATPS) that catalyzes the adenylation of sulfate producing adenosine 5'-phosphosulfate (APS) and diphosphate, the first enzymatic step in sulfur assimilation pathway. APS synthesis involves the formation of a high-energy phosphoric-sulfuric acid anhydride bond driven by GTP hydrolysis by CysN coupled to ATP hydrolysis by CysD. In Methylobacterium radiotolerans (strain ATCC 27329 / DSM 1819 / JCM 2831 / NBRC 15690 / NCIMB 10815 / 0-1), this protein is Sulfate adenylyltransferase subunit 2.